A 305-amino-acid chain; its full sequence is Carbonic anhydrase 5A, mitochondrial (305 aa).

Residues 1 to 38 (MLGRNTWKTSAFSFLVEQMWAPLWSRSMRPGRWCSQRS) constitute a mitochondrion transit peptide. An Alpha-carbonic anhydrase domain is found at 39–296 (CAWQTSNNTL…LMNRKVWASF (258 aa)). 3 residues coordinate Zn(2+): His130, His132, and His155.

The protein belongs to the alpha-carbonic anhydrase family. The cofactor is Zn(2+).

It localises to the mitochondrion. The enzyme catalyses hydrogencarbonate + H(+) = CO2 + H2O. With respect to regulation, activated by L- and D-histidine. Activated by L- and D-phenylalanine. Activated by L-adrenaline. Inhibited by coumarins, sulfonamide derivatives such as acetazolamide and Foscarnet (phosphonoformate trisodium salt). Activated by histamine. In terms of biological role, mitochondrial carbonic anhydrase that catalyzes the reversible conversion of carbon dioxide to bicarbonate/HCO3. Mitochondria are impermeable to HCO3, and thus this intramitochondrial carbonic anhydrase is pivotal in providing HCO3 for multiple mitochondrial enzymes that catalyze the formation of essential metabolites of intermediary metabolism in the urea and Krebs cycles. This Homo sapiens (Human) protein is Carbonic anhydrase 5A, mitochondrial.